The sequence spans 228 residues: MVQAKIAPSLLAGDFANLEKEVGRMLKYGSDWLHVDVMDAQFVPNLTIGPIVVKAMRNHYTKEEAFFDCHLMVIEPERYIDQLADAGASLFCFHYEATEKHEEIISRAHEKGMLVGCALKPKTPVEVILPFVEKLDMVLVMTVEPGKGGQSFMPECLPKVEFLRKKYPTLNVEVDGGLSLKTVDAAADAGANVIVAGTAVFHAQSPEEVISGLRNSVMKAQETKPWFK.

Substrate is bound at residue S9. Residues H34, D36, and H70 each coordinate a divalent metal cation. Catalysis depends on D36, which acts as the Proton acceptor. Residues H70, 146–149, 175–177, and 197–198 contribute to the substrate site; these read GKGG, DGG, and GT. D175 serves as a coordination point for a divalent metal cation. D175 (proton donor) is an active-site residue.

The protein belongs to the ribulose-phosphate 3-epimerase family. Co(2+) serves as cofactor. The cofactor is Fe(2+). Mn(2+) is required as a cofactor. It depends on Zn(2+) as a cofactor.

It catalyses the reaction D-ribulose 5-phosphate = D-xylulose 5-phosphate. It participates in carbohydrate degradation; pentose phosphate pathway; D-xylulose 5-phosphate from D-ribulose 5-phosphate (non-oxidative stage): step 1/1. Its function is as follows. Catalyzes the reversible epimerization of D-ribulose 5-phosphate to D-xylulose 5-phosphate. The polypeptide is Ribulose-phosphate 3-epimerase (Schizosaccharomyces pombe (strain 972 / ATCC 24843) (Fission yeast)).